A 136-amino-acid polypeptide reads, in one-letter code: HetP-like commitment protein Alr2902 (136 aa).

The span at Lys94–Leu109 shows a compositional bias: polar residues. Residues Lys94–Ile120 form a disordered region.

It belongs to the HetP family. As to quaternary structure, in bacterial two-hybrid assays interacts robustly with HetR and Alr3234 and weakly with itself, HetP and Asl1930.

Functionally, delays heterocyst differentiation and commitment when nitrogen is limiting. Interplay between the 4 HetP paralogs controls the timing of commitment to heterocyst formation and its duration. Epistatic analysis show that the 3 paralogs act upstream of hetP to delay commitment (asl1930, alr3234) or inhibit development (alr2902). Asl1930 and Alr3234 must also attenuate the activity of Alr2902. When only this homolog is present no heterocysts are formed, showing it inhibits development. Ectopic expression partially complements a hetP deletion. The sequence is that of HetP-like commitment protein Alr2902 from Nostoc sp. (strain PCC 7120 / SAG 25.82 / UTEX 2576).